The following is a 443-amino-acid chain: MKPLLALVGRPNVGKSTLFNRILRQRSAIVDPTPGVTRDRHIAEGEWQGKQFKLMDTGGYNTDGDVLSKAMLEQTLHALADADSILFITDARAGLSYEDLELARILQRSFQHKQLFFVVNKVESPQLVIEAESFIKTGFTTPYFVSAKDGSGVADLLDDVLEALPEAPEGEVKGDTAVHLAIVGRPNVGKSSFVNALLGTNRHIVSNIPGTTRDAIDSRLMRNQQEYLLIDTAGLRKRTKIDAGIEYYSSLRSERAIERCEVAIVMLDAEQGIEKQDLKIINMAIERKKGVLLLVNKWDLIEKDSKTSIRYEEQLRMAMGNLSYVPVLFVSAMTKKNLYRALDTALQISRNRSQNVSTSQLNKFLEQTLAQVHPATKSGRELKIKYMTQLKSAWPVFGFFCNDPLLVQSNFRKFLENKLREAYNFEGVPISLRFLHKNKVKED.

EngA-type G domains are found at residues 3–168 (PLLA…PEAP) and 178–353 (VHLA…RNRS). GTP contacts are provided by residues 9 to 16 (GRPNVGKS), 56 to 60 (DTGGY), 120 to 123 (NKVE), 184 to 191 (GRPNVGKS), 231 to 235 (DTAGL), and 296 to 299 (NKWD). The 85-residue stretch at 354–438 (QNVSTSQLNK…PISLRFLHKN (85 aa)) folds into the KH-like domain.

It belongs to the TRAFAC class TrmE-Era-EngA-EngB-Septin-like GTPase superfamily. EngA (Der) GTPase family. In terms of assembly, associates with the 50S ribosomal subunit.

GTPase that plays an essential role in the late steps of ribosome biogenesis. The polypeptide is GTPase Der (Chlorobium chlorochromatii (strain CaD3)).